The following is a 490-amino-acid chain: Glutathione hydrolase 6 (490 aa).

Topologically, residues 1–52 (MEPEAGPVLYQKLRVWEPSLESEEEEEEISEQLILDASGPHDSSGNKAGRLP) are cytoplasmic. A helical; Signal-anchor for type II membrane protein membrane pass occupies residues 53–73 (GAWAQLVAALLLLAIGFSLAV). Over 74-490 (RQLCSSGASP…PSGCCPFQGF (417 aa)) the chain is Extracellular. 3 N-linked (GlcNAc...) asparagine glycosylation sites follow: Asn-160, Asn-165, and Asn-374.

The protein belongs to the gamma-glutamyltransferase family. Heterodimer composed of the light and heavy chains. The active site is located in the light chain. In terms of processing, cleaved by autocatalysis into a large and a small subunit and the autocatalytic cleavage is essential to the functional activation of the enzyme.

It is found in the membrane. It catalyses the reaction an N-terminal (5-L-glutamyl)-[peptide] + an alpha-amino acid = 5-L-glutamyl amino acid + an N-terminal L-alpha-aminoacyl-[peptide]. It carries out the reaction glutathione + H2O = L-cysteinylglycine + L-glutamate. The enzyme catalyses an S-substituted glutathione + H2O = an S-substituted L-cysteinylglycine + L-glutamate. It participates in sulfur metabolism; glutathione metabolism. Functionally, hydrolyzes and transfers gamma-glutamyl moieties from glutathione and other gamma-glutamyl compounds to acceptors. This is Glutathione hydrolase 6 from Bos taurus (Bovine).